Here is a 197-residue protein sequence, read N- to C-terminus: FMN-dependent NADH:quinone oxidoreductase (197 aa).

Residue S10 participates in FMN binding.

The protein belongs to the azoreductase type 1 family. As to quaternary structure, homodimer. The cofactor is FMN.

It catalyses the reaction 2 a quinone + NADH + H(+) = 2 a 1,4-benzosemiquinone + NAD(+). The enzyme catalyses N,N-dimethyl-1,4-phenylenediamine + anthranilate + 2 NAD(+) = 2-(4-dimethylaminophenyl)diazenylbenzoate + 2 NADH + 2 H(+). Functionally, quinone reductase that provides resistance to thiol-specific stress caused by electrophilic quinones. In terms of biological role, also exhibits azoreductase activity. Catalyzes the reductive cleavage of the azo bond in aromatic azo compounds to the corresponding amines. The protein is FMN-dependent NADH:quinone oxidoreductase of Mycoplasma pneumoniae (strain ATCC 29342 / M129 / Subtype 1) (Mycoplasmoides pneumoniae).